The following is an 876-amino-acid chain: Leucine--tRNA ligase (876 aa).

The 'HIGH' region motif lies at Pro-43–His-53. The short motif at Lys-632–Ser-636 is the 'KMSKS' region element. Lys-635 contributes to the ATP binding site.

It belongs to the class-I aminoacyl-tRNA synthetase family.

The protein localises to the cytoplasm. The enzyme catalyses tRNA(Leu) + L-leucine + ATP = L-leucyl-tRNA(Leu) + AMP + diphosphate. The polypeptide is Leucine--tRNA ligase (Rhodopseudomonas palustris (strain TIE-1)).